Consider the following 285-residue polypeptide: Ribosomal RNA small subunit methyltransferase H (285 aa).

Residues 34-36 (AGH), aspartate 51, phenylalanine 75, aspartate 96, and histidine 103 each bind S-adenosyl-L-methionine. The segment at 258–285 (PLVPSEKEAAQNPRARSAKLRAAEKEAP) is disordered.

The protein belongs to the methyltransferase superfamily. RsmH family.

It is found in the cytoplasm. The catalysed reaction is cytidine(1402) in 16S rRNA + S-adenosyl-L-methionine = N(4)-methylcytidine(1402) in 16S rRNA + S-adenosyl-L-homocysteine + H(+). Functionally, specifically methylates the N4 position of cytidine in position 1402 (C1402) of 16S rRNA. In Thermus thermophilus (strain ATCC BAA-163 / DSM 7039 / HB27), this protein is Ribosomal RNA small subunit methyltransferase H.